We begin with the raw amino-acid sequence, 624 residues long: Hemocyanin E chain (624 aa).

The Cu cation site is built by His-169, His-173, His-200, His-320, His-324, and His-360. An N-linked (GlcNAc...) asparagine glycan is attached at Asn-445. Cys-529 and Cys-577 are disulfide-bonded.

The protein belongs to the tyrosinase family. Hemocyanin subfamily. Tarantula hemocyanin is a 24-chain polymer with seven different chains identified. As to expression, hemolymph.

It localises to the secreted. The protein localises to the extracellular space. Its function is as follows. Hemocyanins are copper-containing oxygen carriers occurring freely dissolved in the hemolymph of many mollusks and arthropods. In Aphonopelma sp. (American tarantula), this protein is Hemocyanin E chain (HCE).